Reading from the N-terminus, the 456-residue chain is Serine--tRNA ligase (456 aa).

2 disordered regions span residues Pro107–Pro130 and Phe229–Asp253. Positions Gly114 to Arg125 are enriched in basic and acidic residues. The segment covering Leu239–Gly248 has biased composition (polar residues). L-serine is bound at residue Thr260–Glu262. Position 291 to 293 (Arg291 to Glu293) interacts with ATP. Position 314 (Glu314) interacts with L-serine. An ATP-binding site is contributed by Glu378–Ser381. Residue Ser413 participates in L-serine binding.

The protein belongs to the class-II aminoacyl-tRNA synthetase family. Type-1 seryl-tRNA synthetase subfamily. In terms of assembly, homodimer. The tRNA molecule binds across the dimer.

It is found in the cytoplasm. It catalyses the reaction tRNA(Ser) + L-serine + ATP = L-seryl-tRNA(Ser) + AMP + diphosphate + H(+). The enzyme catalyses tRNA(Sec) + L-serine + ATP = L-seryl-tRNA(Sec) + AMP + diphosphate + H(+). Its pathway is aminoacyl-tRNA biosynthesis; selenocysteinyl-tRNA(Sec) biosynthesis; L-seryl-tRNA(Sec) from L-serine and tRNA(Sec): step 1/1. Functionally, catalyzes the attachment of serine to tRNA(Ser). Is also able to aminoacylate tRNA(Sec) with serine, to form the misacylated tRNA L-seryl-tRNA(Sec), which will be further converted into selenocysteinyl-tRNA(Sec). In Nitrosospira multiformis (strain ATCC 25196 / NCIMB 11849 / C 71), this protein is Serine--tRNA ligase.